An 876-amino-acid polypeptide reads, in one-letter code: DNA mismatch repair protein MutS (876 aa).

628–635 is a binding site for ATP; the sequence is GPNMAGKS.

Belongs to the DNA mismatch repair MutS family.

Its function is as follows. This protein is involved in the repair of mismatches in DNA. It is possible that it carries out the mismatch recognition step. This protein has a weak ATPase activity. This is DNA mismatch repair protein MutS from Chlorobaculum parvum (strain DSM 263 / NCIMB 8327) (Chlorobium vibrioforme subsp. thiosulfatophilum).